The sequence spans 162 residues: Large ribosomal subunit protein uL15 (162 aa).

A compositionally biased stretch (basic and acidic residues) spans 1–13 (MKLNEIRDNEGAT). A disordered region spans residues 1-37 (MKLNEIRDNEGATKNRMRVGRGIGSGKGKTAGRGVKG). Gly residues predominate over residues 21-35 (RGIGSGKGKTAGRGV).

The protein belongs to the universal ribosomal protein uL15 family. As to quaternary structure, part of the 50S ribosomal subunit.

Its function is as follows. Binds to the 23S rRNA. The protein is Large ribosomal subunit protein uL15 of Methylobacterium nodulans (strain LMG 21967 / CNCM I-2342 / ORS 2060).